Here is a 275-residue protein sequence, read N- to C-terminus: Protein unc-50 homolog (275 aa).

Over residues 1–26 (MTQYSHVKYTQSPTPSVVSGYSSASR) the composition is skewed to polar residues. Residues 1–39 (MTQYSHVKYTQSPTPSVVSGYSSASRLHSPLPPPANHRR) form a disordered region. At 1-99 (MTQYSHVKYT…TKSQFARDDP (99 aa)) the chain is on the cytoplasmic side. Residues 100 to 120 (AFLVLLVVCLCVTSLGFAYVL) form a helical membrane-spanning segment. Residues 121-129 (GLSFWQSIS) lie on the Lumenal side of the membrane. The helical transmembrane segment at 130 to 150 (FIFYVVFVDCIFVGIIIASFF) threads the bilayer. Topologically, residues 151 to 178 (WAVTNRYLRTNSLEPDIEWGYAFDVHLN) are cytoplasmic. Residues 179 to 199 (AFFPPLMLLHFIQLFFYNWLI) traverse the membrane as a helical segment. Residues 200-207 (SQTWFISR) are Lumenal-facing. Residues 208–228 (FLGNTFWLMGMGYYVYITFLG) form a helical membrane-spanning segment. Residues 229 to 239 (YNCIPHLKNTR) are Cytoplasmic-facing. The helical transmembrane segment at 240 to 260 (IILIALPIIFLLFLVVTIIGW) threads the bilayer. Residues 261–275 (NATISFVNFYKYRVY) lie on the Lumenal side of the membrane.

Belongs to the unc-50 family.

It localises to the golgi apparatus membrane. Its function is as follows. Required for cell surface expression of acetylcholine receptors. This is Protein unc-50 homolog from Drosophila melanogaster (Fruit fly).